A 1115-amino-acid polypeptide reads, in one-letter code: Neural cell adhesion molecule 1 (1115 aa).

Residues M1–S19 form the signal peptide. Ig-like C2-type domains follow at residues L20 to N111, Q116 to Q205, P212 to H302, P309 to E402, and P407 to E492. The Extracellular portion of the chain corresponds to L20–T711. Cystine bridges form between C41–C96 and C139–C189. Residues K152 to R156 and K161 to R165 contribute to the heparin site. N222 is a glycosylation site (N-linked (GlcNAc...) asparagine; partial). Residues C235 and C288 are joined by a disulfide bond. N316, N348, N424, N450, and N479 each carry an N-linked (GlcNAc...) asparagine glycan. A disulfide bridge links C330 with C386. Residues C427 and C480 are joined by a disulfide bond. 2 Fibronectin type-III domains span residues T500–V599 and E601–P696. T706 carries GPI-anchor amidated serine lipidation. The chain crosses the membrane as a helical span at residues G712–M729. The Cytoplasmic portion of the chain corresponds to D730–A1115. Disordered regions lie at residues G756 to E809, F839 to N912, and V924 to A1115. Residues K758–P799 are compositionally biased toward basic and acidic residues. Residues S770 and S774 each carry the phosphoserine modification. 3 stretches are compositionally biased toward low complexity: residues N800 to E809, S845 to S856, and T876 to P896. S887 and S890 each carry phosphoserine. 2 stretches are compositionally biased toward polar residues: residues D902–N912 and S926–E935. A Phosphoserine modification is found at S926. Phosphothreonine is present on T929. Low complexity-rich tracts occupy residues T936–K974 and A999–T1012. 2 positions are modified to phosphoserine: S946 and S958. Phosphothreonine is present on T1001. S1005 carries the phosphoserine modification. Composition is skewed to basic and acidic residues over residues E1019–K1037 and K1074–A1091. T1030 is subject to Phosphothreonine.

In terms of assembly, interacts with MDK. Found in a complex with SLC39A6, SLC39A10 and with NCAM1; this complex controls NCAM1 phosphorylation and integration into focal adhesion complexes during epithelial-tomesenchymal transition. Interacts with synaptic plasticity regulator PANTS. Polysialylated by ST8SIA2 and ST8SIA4. Polysialylation modulates cell interactions by confering both attractive and repulsive properties that are highly regulated by ST8SIA2 and ST8SIA4. Polysialylation is formed on a-2,3-linked sialic acid of core glycans.

The protein resides in the cell membrane. Functionally, this protein is a cell adhesion molecule involved in neuron-neuron adhesion, neurite fasciculation, outgrowth of neurites, etc. This Mus musculus (Mouse) protein is Neural cell adhesion molecule 1.